Consider the following 505-residue polypeptide: Trans-cinnamate 4-monooxygenase (505 aa).

The chain crosses the membrane as a helical span at residues 3–23 (LILLEKSLLAVFFAVIFSIIV). Residues 213–218 (RSRLAQ) and Ala-306 contribute to the (E)-cinnamate site. Cys-447 contacts heme.

This sequence belongs to the cytochrome P450 family. Requires heme as cofactor. As to expression, mostly expressed in stems, and, to a lower extent, in bulbs, roots, leaves and flowers.

The protein resides in the membrane. It catalyses the reaction (E)-cinnamate + reduced [NADPH--hemoprotein reductase] + O2 = (E)-4-coumarate + oxidized [NADPH--hemoprotein reductase] + H2O + H(+). It participates in alkaloid biosynthesis. The protein operates within phenylpropanoid metabolism; trans-4-coumarate biosynthesis; trans-4-coumarate from trans-cinnamate: step 1/1. Catalyzes the first oxidative step of the phenylpropanoid pathway in higher plants by transforming trans-cinnamate into p-coumarate. The compounds formed by this pathway are essential components for lignification, pollination, and defense against ultraviolet light, predators and pathogens. Trans-4-coumarate is a precursor to all amaryllidaceae alkaloids such as galanthamine, lycorine and haemanthamine, and including haemanthamine- and crinamine-type alkaloids, promising anticancer agents. In Narcissus pseudonarcissus (Daffodil), this protein is Trans-cinnamate 4-monooxygenase.